The sequence spans 499 residues: Protein-cysteine N-palmitoyltransferase HHAT (499 aa).

The Cytoplasmic segment spans residues 1–5 (MLPGW). The helical transmembrane segment at 6 to 22 (ELTLCLLVSLGFHFRSF) threads the bilayer. Topologically, residues 23-67 (YEVYKVSREHEEELDQEFELEMDTLFGGLKKDPTDFEWNFWMEWG) are lumenal. A helical membrane pass occupies residues 68-84 (KRRLVWLFIGHMAVSQL). The Cytoplasmic segment spans residues 85–94 (ATLLTKKHRP). The essential for palmitoylation of SHH stretch occupies residues 91–155 (KHRPWIVMVY…TLRLQSVEEV (65 aa)). An intramembrane segment occupies 95–119 (WIVMVYGMWACWCVLGAPGVVMVLL). The Cytoplasmic segment spans residues 120-131 (HSTIAFCVAQFR). Residues 132 to 148 (SVLLSWLCSLLLLSTLR) traverse the membrane as a helical segment. Residues 149–162 (LQSVEEVKRRWYKT) are Lumenal-facing. The helical transmembrane segment at 163-183 (ENEYYLLQFTLTVRCLYYTSF) threads the bilayer. Residues 184–208 (SLELCRQPPSAQPTPSAQGASHSYP) lie on the Cytoplasmic side of the membrane. Cys-188 is lipidated: S-palmitoyl cysteine. Residues 209-223 (WLLTYVFYYPVFHNG) lie within the membrane without spanning it. The Cytoplasmic segment spans residues 224-249 (PILNFPEFFRQMQQPELNSLQHSLCI). The S-palmitoyl cysteine moiety is linked to residue Cys-248. A helical transmembrane segment spans residues 250-277 (VAKGLGRLLCWWWLAELMVHLMYMHALY). The Lumenal segment spans residues 278 to 287 (SSAPLLESVS). The helical transmembrane segment at 288–316 (CWTLGGLALAQVLFFYVKYLVLFGVPALL) threads the bilayer. Residues 317–369 (MRLDGLTPPPLPRCVSTMFSFTGMWRYFDVGLHNFLIRYVYIPLGGSQHGLLG) are Cytoplasmic-facing. A lipid anchor (S-palmitoyl cysteine) is attached at Cys-330. Residues 370-386 (TLLSTATTFAFVSYWHG) form a helical membrane-spanning segment. His-385 is a catalytic residue. Topologically, residues 387 to 389 (SYE) are lumenal. Residues 390–405 (DLWCWAALNWLGVTVE) traverse the membrane as a helical segment. The Cytoplasmic portion of the chain corresponds to 406 to 433 (SGVRRLLETPCVRETLARHLSPQAHHRL). Cys-416 carries the S-palmitoyl cysteine lipid modification. A helical transmembrane segment spans residues 434 to 454 (HALLAACSTSMLILFNLVFLG). GTP is bound at residue 454-461 (GGIQVGKT). Residues 455–468 (GIQVGKTYWNRIFL) lie on the Lumenal side of the membrane. Residues 469-487 (QGWPWVTLSVLGFLYCYSH) traverse the membrane as a helical segment. Topologically, residues 488–499 (VDIAWAQTYTVL) are cytoplasmic.

It belongs to the membrane-bound acyltransferase family. HHAT subfamily.

The protein localises to the endoplasmic reticulum membrane. Its subcellular location is the golgi apparatus membrane. The catalysed reaction is N-terminal L-cysteinyl-[protein] + hexadecanoyl-CoA = N-terminal N-hexadecanoyl-L-cysteinyl-[protein] + CoA + H(+). The enzyme catalyses N-terminal L-cysteinyl-[protein]-C-terminal glycyl cholesterol ester + hexadecanoyl-CoA = N-terminal N-hexadecanoyl-L-cysteinyl-[protein]-C-terminal glycyl cholesterol ester + CoA + H(+). Palmitoyl acyltransferase that catalyzes N-terminal palmitoylation of SHH; which is required for SHH signaling during limb development. It also catalyzes N-terminal palmitoylation of DHH. Promotes the transfer of palmitoyl-CoA from the cytoplasmic to the luminal side of the endoplasmic reticulum membrane, where SHH palmitoylation occurs. Plays a role in proper testis cord formation and the differentiation of Leydig cells. This is Protein-cysteine N-palmitoyltransferase HHAT (Hhat) from Mus musculus (Mouse).